Consider the following 453-residue polypeptide: Kynurenine 3-monooxygenase (453 aa).

This sequence belongs to the aromatic-ring hydroxylase family. KMO subfamily. The cofactor is FAD.

It catalyses the reaction L-kynurenine + NADPH + O2 + H(+) = 3-hydroxy-L-kynurenine + NADP(+) + H2O. It functions in the pathway cofactor biosynthesis; NAD(+) biosynthesis; quinolinate from L-kynurenine: step 1/3. Catalyzes the hydroxylation of L-kynurenine (L-Kyn) to form 3-hydroxy-L-kynurenine (L-3OHKyn). Required for synthesis of quinolinic acid. The chain is Kynurenine 3-monooxygenase from Salinispora tropica (strain ATCC BAA-916 / DSM 44818 / JCM 13857 / NBRC 105044 / CNB-440).